A 226-amino-acid chain; its full sequence is ATP synthase subunit a (226 aa).

7 consecutive transmembrane segments (helical) span residues 18-38, 44-64, 79-99, 105-125, 137-157, 177-197, and 202-222; these read FIIG…ARYA, VVPS…ISFA, LAAT…IPGF, SWSF…FEGI, FMGP…ISHF, FLLV…FAIL, and LLQA…AVVV.

The protein belongs to the ATPase A chain family. In terms of assembly, F-type ATPases have 2 components, CF(1) - the catalytic core - and CF(0) - the membrane proton channel. CF(1) has five subunits: alpha(3), beta(3), gamma(1), delta(1), epsilon(1). CF(0) has three main subunits: a(1), b(2) and c(9-12). The alpha and beta chains form an alternating ring which encloses part of the gamma chain. CF(1) is attached to CF(0) by a central stalk formed by the gamma and epsilon chains, while a peripheral stalk is formed by the delta and b chains.

Its subcellular location is the cell inner membrane. Its function is as follows. Key component of the proton channel; it plays a direct role in the translocation of protons across the membrane. In Helicobacter hepaticus (strain ATCC 51449 / 3B1), this protein is ATP synthase subunit a.